A 160-amino-acid chain; its full sequence is Cyanate hydratase (160 aa).

Active-site residues include Arg100, Glu103, and Ser126.

Belongs to the cyanase family.

The catalysed reaction is cyanate + hydrogencarbonate + 3 H(+) = NH4(+) + 2 CO2. Its function is as follows. Catalyzes the reaction of cyanate with bicarbonate to produce ammonia and carbon dioxide. The chain is Cyanate hydratase from Neosartorya fischeri (strain ATCC 1020 / DSM 3700 / CBS 544.65 / FGSC A1164 / JCM 1740 / NRRL 181 / WB 181) (Aspergillus fischerianus).